Consider the following 670-residue polypeptide: DUF724 domain-containing protein 1 (670 aa).

2 disordered regions span residues 283 to 315 (HNGP…PMTP) and 368 to 445 (ANAE…NNDD). 3 stretches are compositionally biased toward polar residues: residues 294 to 309 (SPSN…SSSG), 379 to 392 (RNQN…TQQM), and 426 to 442 (CNGS…SICN). In terms of domain architecture, DUF724 spans 484 to 669 (PFAKKLPFWK…LEFQTTVSTP (186 aa)).

Expressed in stems and flowers.

It is found in the nucleus. Functionally, may be involved in the polar growth of plant cells via transportation of RNAs. The chain is DUF724 domain-containing protein 1 from Arabidopsis thaliana (Mouse-ear cress).